We begin with the raw amino-acid sequence, 373 residues long: MGYLFEETLSSNPKTPIVVDDDNELGLMAVRLANAAAFPMVLKASLELGVFDTLYAEASRTDSFLSPSEIASKLPTTPRNPGAPVLLDRMLRLLASYSMVKCEKVSVGKGERVYRAEPICRFFLKNNIQDIGSLASQVIVNFDSVFLNTWAQLKDVVLEGGDAFGRAHGGMKLFDYMGTDERFSKLFNQTGFTIAVVKKALEVYQGFKGVNVLVDVGGGVGNTLGVVTSKYPNIKGINFDLTCALAQAPSYPGVEHVAGDMFVDVPTGDAMILKRILHDWTDEDCVKILKNCWKSLPENGKVVVIELVTPDEAENGDINANIAFDMDMLMFTQCSGGKERSRAEFEALAAASCFTHCKFVCQAYHCWIIEFCK.

Residues glycine 217, aspartate 240, aspartate 260, methionine 261, and lysine 274 each coordinate S-adenosyl-L-homocysteine. The Proton acceptor role is filled by histidine 278.

Belongs to the class I-like SAM-binding methyltransferase superfamily. Cation-independent O-methyltransferase family.

The protein operates within secondary metabolite biosynthesis. In terms of biological role, involved in indole glucosinolate biosynthesis. Catalyzes methoxylation reactions of the glucosinolate indole ring. Converts the hydroxy intermediates 4-hydroxy-indol-3-yl-methylglucosinolate (4OH-I3M) and 1-hydroxy-indol-3-yl-methylglucosinolate (1OH-I3M) to 4-methoxy-indol-3-yl-methylglucosinolate (4MO-I3M) and 1-methoxy-indol-3-yl-methylglucosinolate (1MO-I3M), respectively. This chain is Indole glucosinolate O-methyltransferase 2, found in Arabidopsis thaliana (Mouse-ear cress).